The sequence spans 138 residues: Putative pre-16S rRNA nuclease (138 aa).

This sequence belongs to the YqgF nuclease family.

It is found in the cytoplasm. Could be a nuclease involved in processing of the 5'-end of pre-16S rRNA. The protein is Putative pre-16S rRNA nuclease of Fusobacterium nucleatum subsp. nucleatum (strain ATCC 25586 / DSM 15643 / BCRC 10681 / CIP 101130 / JCM 8532 / KCTC 2640 / LMG 13131 / VPI 4355).